The sequence spans 206 residues: Large ribosomal subunit protein uL4 (206 aa).

Positions 62–85 are disordered; sequence KPWRQKGTGRARQGSTRSPQFRGG.

Belongs to the universal ribosomal protein uL4 family. Part of the 50S ribosomal subunit.

Its function is as follows. One of the primary rRNA binding proteins, this protein initially binds near the 5'-end of the 23S rRNA. It is important during the early stages of 50S assembly. It makes multiple contacts with different domains of the 23S rRNA in the assembled 50S subunit and ribosome. Forms part of the polypeptide exit tunnel. The chain is Large ribosomal subunit protein uL4 from Rhodospirillum centenum (strain ATCC 51521 / SW).